Reading from the N-terminus, the 524-residue chain is 56 kDa type-specific antigen (524 aa).

The signal sequence occupies residues 1–22; it reads MKKIMLIASAMSALSLPFSASA. The helical transmembrane segment at 67-87 threads the bilayer; the sequence is LTTGLPFGGTLAAGMTIAPGF. 2 disordered regions span residues 112 to 132 and 387 to 422; these read SKGE…RKRF and EKLA…KGKE. Basic and acidic residues-rich tracts occupy residues 395–405 and 413–422; these read EDAKNQGEGDC and EKSKEGKGKE. Residues 472 to 492 form a helical membrane-spanning segment; it reads TGMVASGALGVAINAAEGVYV.

The protein resides in the cell membrane. May be an adherent factor for rickettsial adsorption to the host-cell surface and a determinant of virulence of individual rickettsial strain. It is the major outer membrane protein. This is 56 kDa type-specific antigen from Orientia tsutsugamushi (Rickettsia tsutsugamushi).